We begin with the raw amino-acid sequence, 486 residues long: Cardiolipin synthase A (486 aa).

2 consecutive transmembrane segments (helical) span residues 3–23 (TFYT…IAGV) and 38–58 (MAWL…YLSF). PLD phosphodiesterase domains follow at residues 219–246 (MDLR…VDPR) and 399–426 (EDGL…DMRS). Active-site residues include histidine 224, lysine 226, aspartate 231, histidine 404, lysine 406, and aspartate 411.

This sequence belongs to the phospholipase D family. Cardiolipin synthase subfamily. ClsA sub-subfamily.

It is found in the cell inner membrane. The catalysed reaction is 2 a 1,2-diacyl-sn-glycero-3-phospho-(1'-sn-glycerol) = a cardiolipin + glycerol. Its function is as follows. Catalyzes the reversible phosphatidyl group transfer from one phosphatidylglycerol molecule to another to form cardiolipin (CL) (diphosphatidylglycerol) and glycerol. The chain is Cardiolipin synthase A from Serratia proteamaculans (strain 568).